The chain runs to 471 residues: Siroheme synthase 1 (471 aa).

Residues 1–203 (MEYLPLFAQL…GDTRAAEAVL (203 aa)) are precorrin-2 dehydrogenase /sirohydrochlorin ferrochelatase. Residues 22 to 23 (EV) and 43 to 44 (KK) contribute to the NAD(+) site. S128 carries the phosphoserine modification. The uroporphyrinogen-III C-methyltransferase stretch occupies residues 215 to 471 (GEIILVGAGP…NLRSSVVNLA (257 aa)). P224 contributes to the S-adenosyl-L-methionine binding site. D247 serves as the catalytic Proton acceptor. Residue K269 is the Proton donor of the active site. S-adenosyl-L-methionine is bound by residues 300–302 (GGD), I305, 330–331 (TA), M382, and G411.

The protein in the N-terminal section; belongs to the precorrin-2 dehydrogenase / sirohydrochlorin ferrochelatase family. It in the C-terminal section; belongs to the precorrin methyltransferase family.

It catalyses the reaction uroporphyrinogen III + 2 S-adenosyl-L-methionine = precorrin-2 + 2 S-adenosyl-L-homocysteine + H(+). The enzyme catalyses precorrin-2 + NAD(+) = sirohydrochlorin + NADH + 2 H(+). It carries out the reaction siroheme + 2 H(+) = sirohydrochlorin + Fe(2+). The protein operates within cofactor biosynthesis; adenosylcobalamin biosynthesis; precorrin-2 from uroporphyrinogen III: step 1/1. It participates in cofactor biosynthesis; adenosylcobalamin biosynthesis; sirohydrochlorin from precorrin-2: step 1/1. Its pathway is porphyrin-containing compound metabolism; siroheme biosynthesis; precorrin-2 from uroporphyrinogen III: step 1/1. It functions in the pathway porphyrin-containing compound metabolism; siroheme biosynthesis; siroheme from sirohydrochlorin: step 1/1. The protein operates within porphyrin-containing compound metabolism; siroheme biosynthesis; sirohydrochlorin from precorrin-2: step 1/1. In terms of biological role, multifunctional enzyme that catalyzes the SAM-dependent methylations of uroporphyrinogen III at position C-2 and C-7 to form precorrin-2 via precorrin-1. Then it catalyzes the NAD-dependent ring dehydrogenation of precorrin-2 to yield sirohydrochlorin. Finally, it catalyzes the ferrochelation of sirohydrochlorin to yield siroheme. The chain is Siroheme synthase 1 from Cronobacter sakazakii (strain ATCC BAA-894) (Enterobacter sakazakii).